A 108-amino-acid polypeptide reads, in one-letter code: Trissin (108 aa).

The first 29 residues, 1–29 (MTKTTMHWLAHFQIILLCIWLMCPPSSQA), serve as a signal peptide directing secretion. Disulfide bonds link Cys32–Cys43, Cys35–Cys52, and Cys39–Cys51. Positions 57–108 (RKRSDPDALRQSSNRRLIDFILLQGRALFTQELRERRHNGTLMDLGLNTYYP) are excised as a propeptide.

The protein localises to the secreted. In terms of biological role, activates the G-protein coupled receptor TrissinR in vitro, leading to increased intracellular calcium ion levels. This chain is Trissin, found in Drosophila melanogaster (Fruit fly).